The following is a 181-amino-acid chain: Ankyrin repeat-containing protein YGL242C (181 aa).

M1 is subject to N-acetylmethionine. ANK repeat units follow at residues 49 to 78 (LGNT…EIEI) and 85 to 120 (DGDT…DPRV). The tract at residues 151–181 (IDSTNGSGDNNEDGEMIDDGPSDDDEEDDKK) is disordered. A compositionally biased stretch (acidic residues) spans 160–181 (NNEDGEMIDDGPSDDDEEDDKK). S172 is subject to Phosphoserine.

In Saccharomyces cerevisiae (strain ATCC 204508 / S288c) (Baker's yeast), this protein is Ankyrin repeat-containing protein YGL242C.